We begin with the raw amino-acid sequence, 359 residues long: Phospho-N-acetylmuramoyl-pentapeptide-transferase (359 aa).

10 consecutive transmembrane segments (helical) span residues 26–46 (TIYG…WVIN), 73–93 (TMGG…WADL), 98–118 (ILIT…DDYL), 134–154 (FLVQ…CPDF), 166–186 (FTPD…VGTS), 197–217 (GLAI…AYVA), 234–254 (CGEI…FLWF), 261–281 (VFMG…IAVI), 286–306 (ILLL…IIQV), and 338–358 (IVRF…TLKI).

It belongs to the glycosyltransferase 4 family. MraY subfamily. The cofactor is Mg(2+).

The protein resides in the cell inner membrane. The enzyme catalyses UDP-N-acetyl-alpha-D-muramoyl-L-alanyl-gamma-D-glutamyl-meso-2,6-diaminopimeloyl-D-alanyl-D-alanine + di-trans,octa-cis-undecaprenyl phosphate = di-trans,octa-cis-undecaprenyl diphospho-N-acetyl-alpha-D-muramoyl-L-alanyl-D-glutamyl-meso-2,6-diaminopimeloyl-D-alanyl-D-alanine + UMP. It functions in the pathway cell wall biogenesis; peptidoglycan biosynthesis. Its function is as follows. Catalyzes the initial step of the lipid cycle reactions in the biosynthesis of the cell wall peptidoglycan: transfers peptidoglycan precursor phospho-MurNAc-pentapeptide from UDP-MurNAc-pentapeptide onto the lipid carrier undecaprenyl phosphate, yielding undecaprenyl-pyrophosphoryl-MurNAc-pentapeptide, known as lipid I. The chain is Phospho-N-acetylmuramoyl-pentapeptide-transferase from Desulforapulum autotrophicum (strain ATCC 43914 / DSM 3382 / VKM B-1955 / HRM2) (Desulfobacterium autotrophicum).